Reading from the N-terminus, the 544-residue chain is NXPE family member 4 (544 aa).

The first 27 residues, 1–27, serve as a signal peptide directing secretion; that stretch reads MKISMINYKSLLALLFILASWIIFTVF. Residues N29, N38, N47, N48, N92, N160, and N210 are each glycosylated (N-linked (GlcNAc...) asparagine).

This sequence belongs to the NXPE family.

It is found in the secreted. This Homo sapiens (Human) protein is NXPE family member 4 (NXPE4).